Here is a 206-residue protein sequence, read N- to C-terminus: Ras-related protein Ral-A (206 aa).

GTP contacts are provided by residues 24 to 29, 40 to 46, and 127 to 130; these read GVGKSA, VEDYEPT, and NKSD. Positions 43 to 51 match the Effector region motif; the sequence is YEPTKADSY. Threonine 46 is a glycosylation site ((Microbial infection) O-linked (Glc) threonine; by P.sordellii toxin TcsL). Serine 194 carries the phosphoserine; by AURKA modification. A Cysteine methyl ester modification is found at cysteine 203. The S-geranylgeranyl cysteine moiety is linked to residue cysteine 203. Positions 204-206 are cleaved as a propeptide — removed in mature form; sequence CIL.

The protein belongs to the small GTPase superfamily. Ras family. In terms of assembly, interacts (via effector domain) with RALBP1; during mitosis, recruits RALBP1 to the mitochondrion where it promotes DNM1L phosphorylation and mitochondrial fission. Interacts with EXOC2/Sec5 and EXOC8/Exo84; binding to EXOC2 and EXOC8 is mutually exclusive. Interacts with Clostridium exoenzyme C3. Interacts with RALGPS1. Interacts with LPAR1 and LPAR2. Interacts with GRK2 in response to LPAR1 activation. RALA and GRK2 binding to LPAR1 is mutually exclusive. Interacts with CDC42. In terms of processing, phosphorylated. Phosphorylation at Ser-194 by AURKA/Aurora kinase A, during mitosis, induces RALA localization to the mitochondrion where it regulates mitochondrial fission. Post-translationally, prenylation is essential for membrane localization. The geranylgeranylated form and the farnesylated mutant do not undergo alternative prenylation in response to geranylgeranyltransferase I inhibitors (GGTIs) and farnesyltransferase I inhibitors (FTIs). (Microbial infection) Glucosylated at Thr-46 by P.sordellii toxin TcsL from strain 6018. Monoglucosylation completely prevents the recognition of the downstream effector, blocking the GTPases in their inactive form. Not glucosylated by TcsL from strain VPI 9048.

It is found in the cell membrane. It localises to the cleavage furrow. The protein localises to the midbody. The protein resides in the midbody ring. Its subcellular location is the mitochondrion. The catalysed reaction is GTP + H2O = GDP + phosphate + H(+). Its activity is regulated as follows. Alternates between an inactive form bound to GDP and an active form bound to GTP. Activated by a guanine nucleotide-exchange factor (GEF) and inactivated by a GTPase-activating protein (GAP). In terms of biological role, multifunctional GTPase involved in a variety of cellular processes including gene expression, cell migration, cell proliferation, oncogenic transformation and membrane trafficking. Accomplishes its multiple functions by interacting with distinct downstream effectors. Acts as a GTP sensor for GTP-dependent exocytosis of dense core vesicles. The RALA-exocyst complex regulates integrin-dependent membrane raft exocytosis and growth signaling. Key regulator of LPAR1 signaling and competes with GRK2 for binding to LPAR1 thus affecting the signaling properties of the receptor. Required for anchorage-independent proliferation of transformed cells. During mitosis, supports the stabilization and elongation of the intracellular bridge between dividing cells. Cooperates with EXOC2 to recruit other components of the exocyst to the early midbody. During mitosis, also controls mitochondrial fission by recruiting to the mitochondrion RALBP1, which mediates the phosphorylation and activation of DNM1L by the mitotic kinase cyclin B-CDK1. This is Ras-related protein Ral-A (RALA) from Homo sapiens (Human).